A 544-amino-acid polypeptide reads, in one-letter code: Aspartokinase (544 aa).

The region spanning 463–535 (LVGKQMVNFI…SAIGDSSAVD (73 aa)) is the ACT domain.

Belongs to the aspartokinase family.

The enzyme catalyses L-aspartate + ATP = 4-phospho-L-aspartate + ADP. Its pathway is amino-acid biosynthesis; L-methionine biosynthesis via de novo pathway; L-homoserine from L-aspartate: step 1/3. It functions in the pathway amino-acid biosynthesis; L-threonine biosynthesis; L-threonine from L-aspartate: step 1/5. Functionally, phosphorylates aspartate, the first step in the biosynthesis of amino acids that derive from aspartate (the aspartate family of amino acids), including methioinine and threonine, the latter of which is a precursor to isoleucine. The polypeptide is Aspartokinase (Candida albicans (strain SC5314 / ATCC MYA-2876) (Yeast)).